We begin with the raw amino-acid sequence, 355 residues long: S-adenosylmethionine:tRNA ribosyltransferase-isomerase (355 aa).

It belongs to the QueA family. Monomer.

Its subcellular location is the cytoplasm. It carries out the reaction 7-aminomethyl-7-carbaguanosine(34) in tRNA + S-adenosyl-L-methionine = epoxyqueuosine(34) in tRNA + adenine + L-methionine + 2 H(+). It functions in the pathway tRNA modification; tRNA-queuosine biosynthesis. Transfers and isomerizes the ribose moiety from AdoMet to the 7-aminomethyl group of 7-deazaguanine (preQ1-tRNA) to give epoxyqueuosine (oQ-tRNA). The polypeptide is S-adenosylmethionine:tRNA ribosyltransferase-isomerase (Burkholderia lata (strain ATCC 17760 / DSM 23089 / LMG 22485 / NCIMB 9086 / R18194 / 383)).